We begin with the raw amino-acid sequence, 161 residues long: Allophycocyanin subunit alpha-B (161 aa).

Asn-71 carries the post-translational modification N4-methylasparagine. Cys-81 is a binding site for (2R,3E)-phycocyanobilin.

This sequence belongs to the phycobiliprotein family. In terms of assembly, heterodimer of an alpha-B and a beta chain forming AP-B. Contains one covalently linked bilin chromophore. The chromophore is added by phycocyanobilin lyase CpcUS.

The protein localises to the cellular thylakoid membrane. Its function is as follows. A variant alpha-allophycocyanin (AP) which forms a complex with beta-AP with maximum absorption at approximately 670 nanometers. It is an important phycobilisome terminal emitter involved in energy transfer to photosystem I. The sequence is that of Allophycocyanin subunit alpha-B (apcD) from Picosynechococcus sp. (strain ATCC 27264 / PCC 7002 / PR-6) (Agmenellum quadruplicatum).